The primary structure comprises 325 residues: Diacylglycerol acyltransferase/mycolyltransferase Ag85B (325 aa).

An N-terminal signal peptide occupies residues Met-1–Ala-40. A substrate-binding site is contributed by Leu-82–Arg-83. The interval Phe-98 to Ile-108 is fibronectin-binding. A disulfide bond links Cys-127 and Cys-132. Positions 166 and 194 each coordinate substrate. The active-site Nucleophile is the Ser-166. The active site involves Glu-270. Substrate-binding positions include Phe-272–Ser-275, Lys-279, and His-302–Trp-304. His-302 is a catalytic residue.

This sequence belongs to the mycobacterial A85 antigen family.

The protein resides in the secreted. The enzyme catalyses 2 alpha,alpha'-trehalose 6-mycolate = alpha,alpha'-trehalose 6,6'-bismycolate + alpha,alpha-trehalose. It catalyses the reaction an acyl-CoA + a 1,2-diacyl-sn-glycerol = a triacyl-sn-glycerol + CoA. Functionally, the antigen 85 proteins (FbpA, FbpB, FbpC) are responsible for the high affinity of mycobacteria for fibronectin, a large adhesive glycoprotein, which facilitates the attachment of M.tuberculosis to murine alveolar macrophages (AMs). They also help to maintain the integrity of the cell wall by catalyzing the transfer of mycolic acids to cell wall arabinogalactan and through the synthesis of alpha,alpha-trehalose dimycolate (TDM, cord factor). They catalyze the transfer of a mycoloyl residue from one molecule of alpha,alpha-trehalose monomycolate (TMM) to another TMM, leading to the formation of TDM. This chain is Diacylglycerol acyltransferase/mycolyltransferase Ag85B (fbpB), found in Mycobacterium tuberculosis (strain ATCC 25177 / H37Ra).